Consider the following 122-residue polypeptide: Large ribosomal subunit protein uL14 (122 aa).

This sequence belongs to the universal ribosomal protein uL14 family. As to quaternary structure, part of the 50S ribosomal subunit. Forms a cluster with proteins L3 and L19. In the 70S ribosome, L14 and L19 interact and together make contacts with the 16S rRNA in bridges B5 and B8.

Binds to 23S rRNA. Forms part of two intersubunit bridges in the 70S ribosome. The sequence is that of Large ribosomal subunit protein uL14 from Dehalococcoides mccartyi (strain ATCC BAA-2100 / JCM 16839 / KCTC 5957 / BAV1).